A 404-amino-acid chain; its full sequence is Glycosyltransferase GlyB (404 aa).

The interval 1-267 is GT8 domain; the sequence is MNTKSIVFNA…ILLRKDIISR (267 aa). UDP contacts are provided by residues 9–14 and 103–104; these read NADNDY and DS. Asp103, Asp105, and His228 together coordinate Mn(2+). A UDP-binding site is contributed by 228 to 233; the sequence is HYTGVK.

It in the N-terminal section; belongs to the glycosyltransferase 8 family.

May be involved in the polymorphic O-glycosylation of the serine-rich repeat protein PsrP. Has equal hydrolytic activity against both UDP-galactose and UDP-glucose; no glycosyltransferase activity has been seen with tested substrates. This Streptococcus pneumoniae serotype 4 (strain ATCC BAA-334 / TIGR4) protein is Glycosyltransferase GlyB.